The chain runs to 706 residues: Fatty acid oxidation complex subunit alpha (706 aa).

Residues 1–188 form an enoyl-CoA hydratase region; it reads MEKTFNLTRR…KMGLVNDVVP (188 aa). Positions 308–706 are 3-hydroxyacyl-CoA dehydrogenase; that stretch reads RKVKKAVILG…TMARENVSFF (399 aa).

In the N-terminal section; belongs to the enoyl-CoA hydratase/isomerase family. This sequence in the central section; belongs to the 3-hydroxyacyl-CoA dehydrogenase family. Heterotetramer of two alpha chains (FadJ) and two beta chains (FadI).

The protein resides in the cytoplasm. It catalyses the reaction a (3S)-3-hydroxyacyl-CoA = a (2E)-enoyl-CoA + H2O. The enzyme catalyses a 4-saturated-(3S)-3-hydroxyacyl-CoA = a (3E)-enoyl-CoA + H2O. It carries out the reaction a (3S)-3-hydroxyacyl-CoA + NAD(+) = a 3-oxoacyl-CoA + NADH + H(+). The catalysed reaction is (3S)-3-hydroxybutanoyl-CoA = (3R)-3-hydroxybutanoyl-CoA. It participates in lipid metabolism; fatty acid beta-oxidation. In terms of biological role, catalyzes the formation of a hydroxyacyl-CoA by addition of water on enoyl-CoA. Also exhibits 3-hydroxyacyl-CoA epimerase and 3-hydroxyacyl-CoA dehydrogenase activities. This is Fatty acid oxidation complex subunit alpha from Shewanella sp. (strain W3-18-1).